The following is a 367-amino-acid chain: Peptide chain release factor 2 (367 aa).

Residue Gln-254 is modified to N5-methylglutamine.

Belongs to the prokaryotic/mitochondrial release factor family. Post-translationally, methylated by PrmC. Methylation increases the termination efficiency of RF2.

It localises to the cytoplasm. Its function is as follows. Peptide chain release factor 2 directs the termination of translation in response to the peptide chain termination codons UGA and UAA. The polypeptide is Peptide chain release factor 2 (Neisseria gonorrhoeae (strain ATCC 700825 / FA 1090)).